Consider the following 178-residue polypeptide: Large ribosomal subunit protein uL6 (178 aa).

It belongs to the universal ribosomal protein uL6 family. As to quaternary structure, part of the 50S ribosomal subunit.

Functionally, this protein binds to the 23S rRNA, and is important in its secondary structure. It is located near the subunit interface in the base of the L7/L12 stalk, and near the tRNA binding site of the peptidyltransferase center. In Campylobacter jejuni subsp. doylei (strain ATCC BAA-1458 / RM4099 / 269.97), this protein is Large ribosomal subunit protein uL6.